Here is a 429-residue protein sequence, read N- to C-terminus: Phosphoribosylamine--glycine ligase (429 aa).

An ATP-grasp domain is found at 109–316; it reads KDFLARHNIP…LVELCQAAIA (208 aa). An ATP-binding site is contributed by 135–196; sequence VREKGAPIVV…EEFLDGEEAS (62 aa). Mg(2+) contacts are provided by glutamate 286 and asparagine 288.

It belongs to the GARS family. Mg(2+) serves as cofactor. The cofactor is Mn(2+).

The enzyme catalyses 5-phospho-beta-D-ribosylamine + glycine + ATP = N(1)-(5-phospho-beta-D-ribosyl)glycinamide + ADP + phosphate + H(+). The protein operates within purine metabolism; IMP biosynthesis via de novo pathway; N(1)-(5-phospho-D-ribosyl)glycinamide from 5-phospho-alpha-D-ribose 1-diphosphate: step 2/2. This chain is Phosphoribosylamine--glycine ligase, found in Vibrio cholerae serotype O1 (strain ATCC 39315 / El Tor Inaba N16961).